We begin with the raw amino-acid sequence, 1324 residues long: MYNQYQQQPQQPQQFGGQQQFNAQPQSTGYGNFYQQQVPTQGQQQQFSGFQTFSNAGALNQQPTGFSQQTQAQPQQPQQQQPQSQPQQGMQQPFGNQQQQMPLTQQLTGFNSMMPQTSFGQPQQQMPMNTSFNQGMSTTAVNAPTGPLQPQQTGFYSQQQPLEPLKPTATGFINSFANTGVDNTLKIPAIRLSFITTQDQAKFEKLFRSVVTPGSNTITGDQCRNILVKSGLQPHQLAKIWTLSDTNKAGVLLFPEFALAMYLVNSVLQGDSIPYELDSRTKAEVSSFVDAINFSVSNDSEVEQKPKTPFDDLTAGISMMQPQPTGYMPQLSFGSQPQQMQQQQQQQQQQPQQQSFQGLTQQPTGGYGAAPQTSFGNTSQALQPQSTGFMPQNSFNQPLNAQTTGGFSSVLNIPPPGSMPQTSFTQQAPMQTSLATGGGFLQPQATGYLPPSNFQATAPLQAQKTGFGNNDLYTSANLASKFIARKEEAITPEEKSLFYKIFETYDVEKTGNLDSATAVEIFRKSGLNRSDLEHIWNLCDTNNSGNLNKQEFALGMHLVYRRLNGEVLPNTLPPSLIPSSTKILNTVKDQLKQGVDKNNRQPTKEDGLRFRNNDDELLPSSRNRRKTIDQSKKVNENKEKIENLKNLIREKKELLASEKLRLENDSQRKQSENADLLRSIENLKSQIQALPSTSKKSPSANNAVPHDLQSRFDTLTARIPNLFKEISDVSKELVSSQLALHHLKVDHPIRGSGPNCKITELDCKNARQRLTLTAGMCTLVGRPEPNYDNLEAQAQHFNEGIETIEKDDQKNQSAINNISTWIQEISSSVQAIIHGRTPSMGLEMDKWESGIGLEPEVRDFIISWKNRRNFDNSSYNTAGYSNGIQISSSATYRNNARAPEEKDSYSSFQTPEERSAYVKEQAKKKMEEKLAALGIKKKSGSSQSSPNPPQLTQQQQPQQQQQQQQQQQQQQQQQPNYYQQPSQPAAAVNNSNLPKANDDDDEDEEDEEERRLLEQLEKLKLKKKQEKEARLAAKRQTSSSPAETKNDNGHDSWDDEPTPTNPTGNQSQAGSHHQYNPFGKSEATQQKPASGAGTPQLNNTPTGGRNPFFKQAPSQSSSFDLKAAEQQRRVQRGLDDSDGWSDDDETEKVNTTANKAVDVSSTAVPATSTASVPVAPSLPQISATTQEQSSVAVPIAPPLPLVKSESSLIPPPPPLPTSITEGSGAPPVPIAPPLPQINSDVAPAVPVAAPLLKVGGTATLAENEEPKPDDASDVLSIPESVASDEEDKFHTPGAEDVSVAPTGAIPPAPPAPPVPVIPPPPPMP.

Composition is skewed to low complexity over residues 1–26 (MYNQ…AQPQ) and 35–54 (QQQV…QTFS). A disordered region spans residues 1–98 (MYNQYQQQPQ…GMQQPFGNQQ (98 aa)). Residues 55 to 67 (NAGALNQQPTGFS) show a composition bias toward polar residues. Over residues 68–98 (QQTQAQPQQPQQQQPQSQPQQGMQQPFGNQQ) the composition is skewed to low complexity. Residues 199-288 (DQAKFEKLFR…SRTKAEVSSF (90 aa)) enclose the EH 1 domain. In terms of domain architecture, EF-hand 1 spans 232–267 (LQPHQLAKIWTLSDTNKAGVLLFPEFALAMYLVNSV). The disordered stretch occupies residues 299–427 (DSEVEQKPKT…SMPQTSFTQQ (129 aa)). The span at 330–364 (QLSFGSQPQQMQQQQQQQQQQPQQQSFQGLTQQPT) shows a compositional bias: low complexity. Residues 371-411 (PQTSFGNTSQALQPQSTGFMPQNSFNQPLNAQTTGGFSSVL) show a composition bias toward polar residues. An EH 2 domain is found at 494–583 (EKSLFYKIFE…PSLIPSSTKI (90 aa)). The region spanning 527–562 (LNRSDLEHIWNLCDTNNSGNLNKQEFALGMHLVYRR) is the EF-hand 2 domain. Ca(2+) is bound by residues Asp540, Asn542, Ser544, Asn546, and Glu551. The segment covering 593–614 (QGVDKNNRQPTKEDGLRFRNND) has biased composition (basic and acidic residues). Disordered stretches follow at residues 593 to 634 (QGVD…SKKV), 891 to 923 (TYRN…EQAK), 935 to 1175 (IKKK…VPVA), 1201 to 1240 (LVKS…INSD), and 1259 to 1324 (TLAE…PPMP). Residues 622–690 (RNRRKTIDQS…ENLKSQIQAL (69 aa)) are a coiled coil. Residues 911-923 (PEERSAYVKEQAK) show a composition bias toward basic and acidic residues. Low complexity predominate over residues 941–984 (SSQSSPNPPQLTQQQQPQQQQQQQQQQQQQQQQQPNYYQQPSQP). Over residues 998 to 1008 (DDDDEDEEDEE) the composition is skewed to acidic residues. Residues 999–1036 (DDDEDEEDEEERRLLEQLEKLKLKKKQEKEARLAAKRQ) adopt a coiled-coil conformation. Residues 1009-1031 (ERRLLEQLEKLKLKKKQEKEARL) are compositionally biased toward basic and acidic residues. 2 stretches are compositionally biased toward polar residues: residues 1061 to 1074 (NPTG…SHHQ) and 1082 to 1103 (EATQ…TPTG). A compositionally biased stretch (basic and acidic residues) spans 1122–1135 (KAAEQQRRVQRGLD). Positions 1136-1146 (DSDGWSDDDET) are enriched in acidic residues. Low complexity predominate over residues 1156 to 1175 (AVDVSSTAVPATSTASVPVA). Composition is skewed to pro residues over residues 1226-1235 (PPVPIAPPLP) and 1304-1324 (AIPP…PPMP).

This sequence belongs to the PAN1 family. As to quaternary structure, component of the PAN1 actin cytoskeleton-regulatory complex.

The protein localises to the cell membrane. The protein resides in the endosome membrane. Its subcellular location is the cytoplasm. It localises to the cytoskeleton. It is found in the actin patch. Its function is as follows. Component of the PAN1 actin cytoskeleton-regulatory complex required for the internalization of endosomes during actin-coupled endocytosis. The complex links the site of endocytosis to the cell membrane-associated actin cytoskeleton. Mediates uptake of external molecules and vacuolar degradation of plasma membrane proteins. Plays a role in the proper organization of the cell membrane-associated actin cytoskeleton and promotes its destabilization. This chain is Actin cytoskeleton-regulatory complex protein PAN1 (PAN1), found in Kluyveromyces lactis (strain ATCC 8585 / CBS 2359 / DSM 70799 / NBRC 1267 / NRRL Y-1140 / WM37) (Yeast).